Consider the following 258-residue polypeptide: Imidazole glycerol phosphate synthase subunit HisF (258 aa).

Catalysis depends on residues Asp-11 and Asp-130.

Belongs to the HisA/HisF family. As to quaternary structure, heterodimer of HisH and HisF.

It localises to the cytoplasm. It catalyses the reaction 5-[(5-phospho-1-deoxy-D-ribulos-1-ylimino)methylamino]-1-(5-phospho-beta-D-ribosyl)imidazole-4-carboxamide + L-glutamine = D-erythro-1-(imidazol-4-yl)glycerol 3-phosphate + 5-amino-1-(5-phospho-beta-D-ribosyl)imidazole-4-carboxamide + L-glutamate + H(+). It functions in the pathway amino-acid biosynthesis; L-histidine biosynthesis; L-histidine from 5-phospho-alpha-D-ribose 1-diphosphate: step 5/9. Its function is as follows. IGPS catalyzes the conversion of PRFAR and glutamine to IGP, AICAR and glutamate. The HisF subunit catalyzes the cyclization activity that produces IGP and AICAR from PRFAR using the ammonia provided by the HisH subunit. The protein is Imidazole glycerol phosphate synthase subunit HisF of Stenotrophomonas maltophilia (strain K279a).